A 290-amino-acid chain; its full sequence is Putative phosphatase MPN_427 (290 aa).

D16 (nucleophile) is an active-site residue. Mg(2+) is bound at residue D16. L17 provides a ligand contact to phosphate. A Mg(2+)-binding site is contributed by D18. Residues 53-54 (TG) and K216 contribute to the phosphate site. Positions 239 and 240 each coordinate Mg(2+). Residue N242 participates in phosphate binding.

The protein belongs to the HAD-like hydrolase superfamily. Cof family. Mg(2+) serves as cofactor.

The protein is Putative phosphatase MPN_427 of Mycoplasma pneumoniae (strain ATCC 29342 / M129 / Subtype 1) (Mycoplasmoides pneumoniae).